The sequence spans 362 residues: UDP-3-O-acylglucosamine N-acyltransferase 1 (362 aa).

The Proton acceptor role is filled by His-258.

Belongs to the transferase hexapeptide repeat family. LpxD subfamily. Homotrimer.

The catalysed reaction is a UDP-3-O-[(3R)-3-hydroxyacyl]-alpha-D-glucosamine + a (3R)-hydroxyacyl-[ACP] = a UDP-2-N,3-O-bis[(3R)-3-hydroxyacyl]-alpha-D-glucosamine + holo-[ACP] + H(+). Its pathway is bacterial outer membrane biogenesis; LPS lipid A biosynthesis. Catalyzes the N-acylation of UDP-3-O-acylglucosamine using 3-hydroxyacyl-ACP as the acyl donor. Is involved in the biosynthesis of lipid A, a phosphorylated glycolipid that anchors the lipopolysaccharide to the outer membrane of the cell. The polypeptide is UDP-3-O-acylglucosamine N-acyltransferase 1 (Nitrobacter winogradskyi (strain ATCC 25391 / DSM 10237 / CIP 104748 / NCIMB 11846 / Nb-255)).